A 344-amino-acid polypeptide reads, in one-letter code: MLTLGLESSCDETACALVDADAQIVANVVSSQQYHASYGGVVPELASRAHLQMLPSVVNSALEKSGVSLDDIDLIAVTHTPGLIGSLAVGVNFAKGLAIGSQKPMIGVNHVEAHLYAAYMEAKNVEFPALGLVMSGAHTSMFLMEDPLSYKLIGNTRDDAIGETFDKVGRFLGLPYPGGALIEMMASQGCEESYPFSAAKVPGYDLSFSGLKTAVLYAIKGNNSNSRSPLPDLSQKEKNNIAASFQKAAFMTIAQKLPKIIKNFSCRSILVGGGVANNKYFQTLLQNTLNLPLYFPSSKLCTDNAAMIAGLGRELFLSRKTTQGITPCARYRWESVADSLSPHP.

Residues His-110 and His-114 each coordinate Fe cation. Residues 133–137 (VMSGA), Asp-166, Gly-179, and Asn-278 contribute to the substrate site. Asp-303 is a Fe cation binding site.

This sequence belongs to the KAE1 / TsaD family. Fe(2+) is required as a cofactor.

It is found in the cytoplasm. It catalyses the reaction L-threonylcarbamoyladenylate + adenosine(37) in tRNA = N(6)-L-threonylcarbamoyladenosine(37) in tRNA + AMP + H(+). In terms of biological role, required for the formation of a threonylcarbamoyl group on adenosine at position 37 (t(6)A37) in tRNAs that read codons beginning with adenine. Is involved in the transfer of the threonylcarbamoyl moiety of threonylcarbamoyl-AMP (TC-AMP) to the N6 group of A37, together with TsaE and TsaB. TsaD likely plays a direct catalytic role in this reaction. In Chlamydia felis (strain Fe/C-56) (Chlamydophila felis), this protein is tRNA N6-adenosine threonylcarbamoyltransferase.